Consider the following 298-residue polypeptide: Small ribosomal subunit protein uS3 (298 aa).

The 69-residue stretch at 39–107 folds into the KH type-2 domain; the sequence is VREYLKAKLK…PVAVNIEEVR (69 aa). The tract at residues 214–298 is disordered; sequence PAAVEARTDE…PAAAADGKGE (85 aa). Residues 219 to 245 are compositionally biased toward basic and acidic residues; that stretch reads ARTDEERRPRGPRRDDRGARPGADRPA. Low complexity predominate over residues 277 to 298; sequence KPAVQRVRKVAAPAAAADGKGE.

Belongs to the universal ribosomal protein uS3 family. Part of the 30S ribosomal subunit. Forms a tight complex with proteins S10 and S14.

Its function is as follows. Binds the lower part of the 30S subunit head. Binds mRNA in the 70S ribosome, positioning it for translation. The polypeptide is Small ribosomal subunit protein uS3 (Albidiferax ferrireducens (strain ATCC BAA-621 / DSM 15236 / T118) (Rhodoferax ferrireducens)).